The primary structure comprises 402 residues: E3 ubiquitin-protein ligase MARCHF11 (402 aa).

Residues 1–11 are compositionally biased toward gly residues; sequence MSFEGGHGGSR. The interval 1–161 is disordered; the sequence is MSFEGGHGGS…SGGGDQRAGH (161 aa). Pro residues predominate over residues 21–56; sequence EPPPQPPPPPPPTPPPGEPAPVPAAPRYLPPLPASP. Residues 111 to 124 are compositionally biased toward low complexity; that stretch reads EAAAAKGGPGESEA. An RING-CH-type zinc finger spans residues 162–222; sequence QHQHHQPICK…ELCCYRYHVI (61 aa). Zn(2+) contacts are provided by cysteine 170, cysteine 173, cysteine 186, cysteine 188, histidine 196, cysteine 199, cysteine 212, and cysteine 215. 2 helical membrane passes run 245-265 and 278-298; these read MIAVILGSLFLIASVTWLLWS and ILFQICYGMYGFMDLVCIGLI. Positions 371–374 match the YXXL motif motif; that stretch reads YVLL. A PDZ-binding motif is present at residues 399–402; sequence VTSV.

As to quaternary structure, interacts (YXXL motif) with AP1M1. Interacts (via PDZ-binding motif) with LIN7A. Interacts with unidentified fucose glycoproteins.

The protein localises to the cytoplasmic vesicle membrane. The enzyme catalyses S-ubiquitinyl-[E2 ubiquitin-conjugating enzyme]-L-cysteine + [acceptor protein]-L-lysine = [E2 ubiquitin-conjugating enzyme]-L-cysteine + N(6)-ubiquitinyl-[acceptor protein]-L-lysine.. It functions in the pathway protein modification; protein ubiquitination. E3 ubiquitin-protein ligase that mediates polyubiquitination of CD4. E3 ubiquitin ligases accept ubiquitin from an E2 ubiquitin-conjugating enzyme in the form of a thioester and then directly transfer the ubiquitin to targeted substrates. May play a role in ubuquitin-dependent protein sorting in developmenting spermatids. In Homo sapiens (Human), this protein is E3 ubiquitin-protein ligase MARCHF11.